Consider the following 443-residue polypeptide: Aspartate--tRNA(Asp/Asn) ligase (443 aa).

E175 contributes to the L-aspartate binding site. The aspartate stretch occupies residues Q197–K200. L-aspartate is bound at residue R219. ATP is bound by residues R219–E221, R227–L229, and E366. Residues E366 and S369 each coordinate Mg(2+). Residues S369 and R373 each coordinate L-aspartate. G414–R417 contributes to the ATP binding site.

This sequence belongs to the class-II aminoacyl-tRNA synthetase family. Type 2 subfamily. Homodimer. Mg(2+) is required as a cofactor.

Its subcellular location is the cytoplasm. It catalyses the reaction tRNA(Asx) + L-aspartate + ATP = L-aspartyl-tRNA(Asx) + AMP + diphosphate. Its function is as follows. Aspartyl-tRNA synthetase with relaxed tRNA specificity since it is able to aspartylate not only its cognate tRNA(Asp) but also tRNA(Asn). Reaction proceeds in two steps: L-aspartate is first activated by ATP to form Asp-AMP and then transferred to the acceptor end of tRNA(Asp/Asn). This chain is Aspartate--tRNA(Asp/Asn) ligase, found in Methanococcoides burtonii (strain DSM 6242 / NBRC 107633 / OCM 468 / ACE-M).